Reading from the N-terminus, the 408-residue chain is LIN1-like protein (408 aa).

Residues 1-161 (MKRTLRNPGN…SVPSSPKRMS (161 aa)) are disordered. The span at 41–52 (YYESESEEDEDQ) shows a compositional bias: acidic residues. 3 stretches are compositionally biased toward basic and acidic residues: residues 53–62 (ILNKEKKEGQ), 73–109 (DEKR…KEVL), and 119–129 (NGKYSKLRYED). Residues 344-402 (SSQYNFKWEFDDKTYGPYTASQIQAWSNEGYFTDAKHAAFIQLANMDEWMYPNNICFCD) form the GYF domain.

Belongs to the LIN1 family.

The polypeptide is LIN1-like protein (Schizosaccharomyces pombe (strain 972 / ATCC 24843) (Fission yeast)).